The sequence spans 299 residues: Acetylglutamate kinase (299 aa).

Substrate is bound by residues 72–73, arginine 94, and asparagine 196; that span reads GG.

It belongs to the acetylglutamate kinase family. ArgB subfamily.

The protein localises to the cytoplasm. The enzyme catalyses N-acetyl-L-glutamate + ATP = N-acetyl-L-glutamyl 5-phosphate + ADP. Its pathway is amino-acid biosynthesis; L-arginine biosynthesis; N(2)-acetyl-L-ornithine from L-glutamate: step 2/4. In terms of biological role, catalyzes the ATP-dependent phosphorylation of N-acetyl-L-glutamate. The polypeptide is Acetylglutamate kinase (Burkholderia cenocepacia (strain HI2424)).